Consider the following 156-residue polypeptide: Cyanate hydratase (156 aa).

Active-site residues include arginine 96, glutamate 99, and serine 122.

This sequence belongs to the cyanase family.

It carries out the reaction cyanate + hydrogencarbonate + 3 H(+) = NH4(+) + 2 CO2. In terms of biological role, catalyzes the reaction of cyanate with bicarbonate to produce ammonia and carbon dioxide. The sequence is that of Cyanate hydratase from Burkholderia orbicola (strain MC0-3).